Reading from the N-terminus, the 95-residue chain is 6 kDa early secretory antigenic target homolog (95 aa).

Belongs to the WXG100 family. ESAT-6 subfamily. As to quaternary structure, forms a tight 1:1 complex with EsxB.

The protein resides in the secreted. In terms of biological role, a secreted protein that might play a role in virulence. The chain is 6 kDa early secretory antigenic target homolog (esxA) from Mycobacterium leprae (strain TN).